The primary structure comprises 388 residues: Succinate--CoA ligase [ADP-forming] subunit beta (388 aa).

The region spanning Lys9–Glu244 is the ATP-grasp domain. Residues Lys46, Gly53–Gly55, Glu99, Ala102, and Glu107 each bind ATP. The Mg(2+) site is built by Asn199 and Asp213. Residues Asn264 and Gly321 to Met323 each bind substrate.

It belongs to the succinate/malate CoA ligase beta subunit family. In terms of assembly, heterotetramer of two alpha and two beta subunits. Requires Mg(2+) as cofactor.

It catalyses the reaction succinate + ATP + CoA = succinyl-CoA + ADP + phosphate. The enzyme catalyses GTP + succinate + CoA = succinyl-CoA + GDP + phosphate. Its pathway is carbohydrate metabolism; tricarboxylic acid cycle; succinate from succinyl-CoA (ligase route): step 1/1. Succinyl-CoA synthetase functions in the citric acid cycle (TCA), coupling the hydrolysis of succinyl-CoA to the synthesis of either ATP or GTP and thus represents the only step of substrate-level phosphorylation in the TCA. The beta subunit provides nucleotide specificity of the enzyme and binds the substrate succinate, while the binding sites for coenzyme A and phosphate are found in the alpha subunit. This chain is Succinate--CoA ligase [ADP-forming] subunit beta, found in Burkholderia cenocepacia (strain HI2424).